Consider the following 449-residue polypeptide: Asparagine--tRNA ligase (449 aa).

It belongs to the class-II aminoacyl-tRNA synthetase family. Homodimer.

The protein resides in the cytoplasm. The catalysed reaction is tRNA(Asn) + L-asparagine + ATP = L-asparaginyl-tRNA(Asn) + AMP + diphosphate + H(+). This Mesomycoplasma hyopneumoniae (strain 7448) (Mycoplasma hyopneumoniae) protein is Asparagine--tRNA ligase.